A 293-amino-acid polypeptide reads, in one-letter code: Bis(5'-nucleosyl)-tetraphosphatase, symmetrical (293 aa).

This sequence belongs to the Ap4A hydrolase family.

The catalysed reaction is P(1),P(4)-bis(5'-adenosyl) tetraphosphate + H2O = 2 ADP + 2 H(+). Hydrolyzes diadenosine 5',5'''-P1,P4-tetraphosphate to yield ADP. This Pseudomonas fluorescens (strain Pf0-1) protein is Bis(5'-nucleosyl)-tetraphosphatase, symmetrical.